The sequence spans 444 residues: 3-isopropylmalate dehydratase large subunit (444 aa).

[4Fe-4S] cluster-binding residues include C348, C408, and C411.

This sequence belongs to the aconitase/IPM isomerase family. LeuC type 1 subfamily. In terms of assembly, heterodimer of LeuC and LeuD. It depends on [4Fe-4S] cluster as a cofactor.

It catalyses the reaction (2R,3S)-3-isopropylmalate = (2S)-2-isopropylmalate. Its pathway is amino-acid biosynthesis; L-leucine biosynthesis; L-leucine from 3-methyl-2-oxobutanoate: step 2/4. Catalyzes the isomerization between 2-isopropylmalate and 3-isopropylmalate, via the formation of 2-isopropylmaleate. This Buchnera aphidicola subsp. Uroleucon ambrosiae protein is 3-isopropylmalate dehydratase large subunit.